We begin with the raw amino-acid sequence, 69 residues long: Putative membrane protein insertion efficiency factor (69 aa).

The protein belongs to the UPF0161 family.

It localises to the cell inner membrane. Could be involved in insertion of integral membrane proteins into the membrane. This Magnetococcus marinus (strain ATCC BAA-1437 / JCM 17883 / MC-1) protein is Putative membrane protein insertion efficiency factor.